We begin with the raw amino-acid sequence, 427 residues long: 3-phosphoshikimate 1-carboxyvinyltransferase (427 aa).

Lys22, Ser23, and Arg27 together coordinate 3-phosphoshikimate. Lys22 provides a ligand contact to phosphoenolpyruvate. 2 residues coordinate phosphoenolpyruvate: Gly96 and Arg124. 7 residues coordinate 3-phosphoshikimate: Ser170, Ser171, Gln172, Ser198, Asp314, Asn337, and Lys341. Gln172 contacts phosphoenolpyruvate. Catalysis depends on Asp314, which acts as the Proton acceptor. Residues Arg345, Arg387, and Lys412 each coordinate phosphoenolpyruvate.

The protein belongs to the EPSP synthase family. Monomer.

It is found in the cytoplasm. The catalysed reaction is 3-phosphoshikimate + phosphoenolpyruvate = 5-O-(1-carboxyvinyl)-3-phosphoshikimate + phosphate. Its pathway is metabolic intermediate biosynthesis; chorismate biosynthesis; chorismate from D-erythrose 4-phosphate and phosphoenolpyruvate: step 6/7. Catalyzes the transfer of the enolpyruvyl moiety of phosphoenolpyruvate (PEP) to the 5-hydroxyl of shikimate-3-phosphate (S3P) to produce enolpyruvyl shikimate-3-phosphate and inorganic phosphate. The sequence is that of 3-phosphoshikimate 1-carboxyvinyltransferase from Tolumonas auensis (strain DSM 9187 / NBRC 110442 / TA 4).